The primary structure comprises 430 residues: Probable sugar isomerase R00627 (430 aa).

Residues His257, Asp289, and Asp291 each coordinate Mn(2+).

The protein belongs to the rhamnose isomerase family. Mn(2+) is required as a cofactor.

In Rhizobium meliloti (strain 1021) (Ensifer meliloti), this protein is Probable sugar isomerase R00627.